Reading from the N-terminus, the 545-residue chain is CTP synthase (545 aa).

Residues 1–265 (MTKYIFITGG…DEIVVKKLSL (265 aa)) form an amidoligase domain region. Residue serine 13 coordinates CTP. Serine 13 provides a ligand contact to UTP. ATP contacts are provided by residues 14–19 (SLGKGI) and aspartate 71. Mg(2+) is bound by residues aspartate 71 and glutamate 139. CTP is bound by residues 146–148 (DIE), 186–191 (KTKPTQ), and lysine 222. Residues 186–191 (KTKPTQ) and lysine 222 contribute to the UTP site. The Glutamine amidotransferase type-1 domain occupies 290-541 (KIAMVGKYTE…VFAARIHHQE (252 aa)). Glycine 351 serves as a coordination point for L-glutamine. Cysteine 378 acts as the Nucleophile; for glutamine hydrolysis in catalysis. Residues 379–382 (LGMQ), glutamate 402, and arginine 469 each bind L-glutamine. Residues histidine 514 and glutamate 516 contribute to the active site.

It belongs to the CTP synthase family. In terms of assembly, homotetramer.

It carries out the reaction UTP + L-glutamine + ATP + H2O = CTP + L-glutamate + ADP + phosphate + 2 H(+). The catalysed reaction is L-glutamine + H2O = L-glutamate + NH4(+). The enzyme catalyses UTP + NH4(+) + ATP = CTP + ADP + phosphate + 2 H(+). The protein operates within pyrimidine metabolism; CTP biosynthesis via de novo pathway; CTP from UDP: step 2/2. With respect to regulation, allosterically activated by GTP, when glutamine is the substrate; GTP has no effect on the reaction when ammonia is the substrate. The allosteric effector GTP functions by stabilizing the protein conformation that binds the tetrahedral intermediate(s) formed during glutamine hydrolysis. Inhibited by the product CTP, via allosteric rather than competitive inhibition. In terms of biological role, catalyzes the ATP-dependent amination of UTP to CTP with either L-glutamine or ammonia as the source of nitrogen. Regulates intracellular CTP levels through interactions with the four ribonucleotide triphosphates. The protein is CTP synthase of Legionella pneumophila (strain Lens).